The following is a 319-amino-acid chain: MLFNNFLCFAVSAIPLVSAMPLGNAPYHHHHHAGLNASNITVGVNVTNTTAFSKRDGGFPDGVYDCSSFPDDQNGVVRLDYLGFGGWSGVQKNDGKYGTASTCQDNTYCSYACKPGMSKTQWPSEQPDNGVSVGGLYCKNGKLYLTQKDNSNLCEDGKGTAYVKNTLSSNVAICRTDYPGTENMNIPTNIDGGSKQPLSDVDEDSYYNWGGKKTSAQYYVNKSGRSAEDVCVWGNEGDDYGNWAPMNFGSGYTDGKTWLSMSFNPLSSAKLDYNIRIKSDGGSLSGDCYYEDGSFHGSTADSSGCTVSVTGGNAYFELY.

The first 19 residues, 1–19 (MLFNNFLCFAVSAIPLVSA), serve as a signal peptide directing secretion. Residues asparagine 36, asparagine 39, asparagine 45, asparagine 48, and asparagine 221 are each glycosylated (N-linked (GlcNAc...) asparagine).

Belongs to the SUN family.

The protein resides in the secreted. In terms of biological role, cell surface beta-glucosidase involved in cell wall biogenesis. This Schizosaccharomyces pombe (strain 972 / ATCC 24843) (Fission yeast) protein is Probable secreted beta-glucosidase C2G2.17c.